A 1092-amino-acid polypeptide reads, in one-letter code: MDGKRKFNGTSNGHAKKPRNPDDDEEMGFEAELAAFENSEDMDQTLLMGDGPENQTTSERWSRPPPPELDPSKHNLEFQQLDVENYLGQPLPGMPGAQIGPVPVVRMFGVTMEGNSVCCHVHGFCPYFYIEAPSQFEEHHCEKLQKALDQKVIADIRNNKDNVQEAVLMVELVEKLNIHGYNGDKKQRYIKISVTLPRFVAAASRLLKKEVIMSEIDFQDCRAFENNIDFDIRFMVDTDVVGCNWIELPMGHWRIRNSHSKPLPESRCQIEVDVAFDRFISHEPEGEWSKVAPFRILSFDIECAGRKGIFPEAKIDPVIQIANMVIRQGEREPFIRNVFTLNECAPIIGSQVLCHDKETQMLDKWSAFVREVDPDILTGYNINNFDFPYLLNRAAHLKVRNFEYLGRIKNIRSVIKEQMLQSKQMGRRENQYVNFEGRVPFDLLFVLLRDYKLRSYTLNAVSYHFLQEQKEDVHHSIITDLQNGDEQTRRRLAMYCLKDAYLPLRLLEKLMAIVNYMEMARVTGVPLESLLTRGQQIKVLSQLLRKAKTKGFIMPSYTSQGSDEQYEGATVIEPKRGYYADPISTLDFASLYPSIMMAHNLCYTTLVLGGTREKLRQQENLQDDQVERTPANNYFVKSEVRRGLLPEILESLLAARKRAKNDLKVETDPFKRKVLDGRQLALKISANSVYGFTGAQVGKLPCLEISGSVTAYGRTMIEMTKNEVESHYTQANGYENNAVVIYGDTDSVMVNFGVKTLERSMELGREAAELVSSKFVHPIKLEFEKVYYPYLLINKKRYAGLYFTRPDTYDKMDCKGIETVRRDNSPLVANLMNSCLQKLLIERDPDGAVAYVKQVIADLLCNRIDISHLVITKELAKTDYAAKQAHVELAAKMKKRDPGTAPKLGDRVPYVICAAAKNTPAYQKAEDPLYVLENSVPIDATYYLEQQLSKPLLRIFEPILGDNAESILLKGEHTRTRTVVTSKVGGLAGFMTKKTSCLGCKSLMPKGYEQACLCPHCEPRMSELYQKEVGAKRELEETFSRLWTECQRCQESLHEEVICSNRDCPIFYMRQKVRMDLDNQEKRVLRFGLAEW.

The segment at 1–71 (MDGKRKFNGT…SRPPPPELDP (71 aa)) is disordered. The short motif at 4-19 (KRKFNGTSNGHAKKPR) is the Nuclear localization signal element. Zn(2+)-binding residues include C997, C1000, C1014, and C1017. The segment at 997-1017 (CLGCKSLMPKGYEQACLCPHC) adopts a CysA-type zinc-finger fold. Positions 1046, 1049, 1059, and 1064 each coordinate [4Fe-4S] cluster. Positions 1046–1064 (CQRCQESLHEEVICSNRDC) match the CysB motif motif.

The protein belongs to the DNA polymerase type-B family. In terms of assembly, catalytic component of the DNA polymerase delta complex consisting of three subunits: the catalytic subunit PolD1 and two accessory subunits PolD2/Pol31 and PolD3/Pol32. Within the delta complex, interacts with both PolD2 and PolD3, and is able to interact with PolD2 in the absence of PolD3. Interacts with PCNA and PCNA2. The cofactor is [4Fe-4S] cluster. It depends on Mg(2+) as a cofactor. In terms of tissue distribution, expressed in ovaries (at the protein level). Expressed in embryos (at the protein level).

The protein localises to the nucleus. Its subcellular location is the nucleoplasm. It carries out the reaction DNA(n) + a 2'-deoxyribonucleoside 5'-triphosphate = DNA(n+1) + diphosphate. Inhibited by KCL. Also inhibited by carbonyldiphosphonate, aphidicolin and N-ethylmaleimide (NEM). As the catalytic component of the DNA polymerase delta complex, plays a crucial role in high fidelity genome replication, including lagging strand synthesis, DNA recombination and repair. Exhibits both DNA polymerase and 3'- to 5'-exonuclease activities. Required at the nucleus of rapidly dividing embryonic cells to activate genome replication during the earliest cell cycles. Likely to require the presence of accessory proteins PolD2 and PolD3 for full activity. This is DNA polymerase delta catalytic subunit from Drosophila melanogaster (Fruit fly).